The primary structure comprises 150 residues: MSNVDPSLLILLVLAGLGIISHNMTVTLAMIFLLVIKITPLNQYFPLVEKYGMTIGILILTIGVMTPIATGRISAQEVFNSFLNWKSLLAIAIGIIVSWLGARGVSLMNNQPSTVAGLLVGTVIGVALFRGVPVGPLIAAGILSLLIGKS.

The next 4 helical transmembrane spans lie at 16–36, 51–71, 82–102, and 123–143; these read GLGI…LLVI, YGMT…IATG, FLNW…WLGA, and VIGV…AGIL.

The protein belongs to the UPF0756 family.

The protein localises to the cell membrane. The sequence is that of UPF0756 membrane protein PMI1560 from Proteus mirabilis (strain HI4320).